We begin with the raw amino-acid sequence, 77 residues long: Defensin-B6 (77 aa).

The N-terminal stretch at methionine 1–glycine 20 is a signal peptide. Disulfide bonds link cysteine 43/cysteine 70, cysteine 50/cysteine 64, and cysteine 54/cysteine 71.

This sequence belongs to the beta-defensin family. In terms of tissue distribution, lowly expressed in spleen, kidney and lung.

It is found in the secreted. In terms of biological role, has antimicrobial activity. This chain is Defensin-B6, found in Ornithorhynchus anatinus (Duckbill platypus).